The primary structure comprises 258 residues: Indole-3-glycerol phosphate synthase (258 aa).

This sequence belongs to the TrpC family.

It carries out the reaction 1-(2-carboxyphenylamino)-1-deoxy-D-ribulose 5-phosphate + H(+) = (1S,2R)-1-C-(indol-3-yl)glycerol 3-phosphate + CO2 + H2O. Its pathway is amino-acid biosynthesis; L-tryptophan biosynthesis; L-tryptophan from chorismate: step 4/5. The protein is Indole-3-glycerol phosphate synthase of Campylobacter jejuni subsp. doylei (strain ATCC BAA-1458 / RM4099 / 269.97).